We begin with the raw amino-acid sequence, 23 residues long: Potassium channel toxin kappa-KTx 1.3 (23 aa).

Cystine bridges form between Cys4–Cys22 and Cys8–Cys18.

The protein belongs to the short scorpion toxin superfamily. Potassium channel inhibitor kappa-KTx family. Kappa-KTx 1 subfamily. In terms of assembly, monomer. Is not amidated. As to expression, expressed by the venom gland.

The protein resides in the secreted. Shows very weak blocking activity on voltage-gated potassium channels Kv10.1/KCNH1/EAG1 (6.2% inhibition by 40 uM of the toxin). Has no effect on the other voltage-gated potassium channels tested. The chain is Potassium channel toxin kappa-KTx 1.3 from Heterometrus spinifer (Asia giant forest scorpion).